A 352-amino-acid polypeptide reads, in one-letter code: MDYQVSSPIYDIDYYTSEPCQKINVKQIAARLLPPLYSLVFIFGFVGNMLVILILINCKRLKSMTDIYLLNLAISDLFFLLTVPFWAHYAAAQWDFGNTMCQLLTGLYFIGFFSGIFFIILLTIDRYLAIVHAVFALKARTVTFGVVTSVITWVVAVFASLPGIIFTRSQKEGLHYTCSSHFPYSQYQFWKNFQTLKIVILGLVLPLLVMVICYSGILKTLLRCRNEKKRHRAVRLIFTIMIVYFLFWAPYNIVLLLNTFQEFFGLNNCSSSNRLDQAMQVTETLGMTHCCINPIIYAFVGEKFRNYLLVFFQKHIAKRFCKCCSIFQQEAPERASSVYTRSTGEQEISVGL.

Residues 1–30 (MDYQVSSPIYDIDYYTSEPCQKINVKQIAA) lie on the Extracellular side of the membrane. At Tyr3 the chain carries Sulfotyrosine. O-linked (GalNAc...) serine glycosylation is found at Ser6 and Ser7. Residues Tyr10, Tyr14, and Tyr15 each carry the sulfotyrosine modification. Intrachain disulfides connect Cys20–Cys269 and Cys101–Cys178. A helical transmembrane segment spans residues 31-58 (RLLPPLYSLVFIFGFVGNMLVILILINC). Topologically, residues 59-68 (KRLKSMTDIY) are cytoplasmic. Residues 69 to 89 (LLNLAISDLFFLLTVPFWAHY) form a helical membrane-spanning segment. Residues 90–102 (AAAQWDFGNTMCQ) are Extracellular-facing. Residues 103–124 (LLTGLYFIGFFSGIFFIILLTI) traverse the membrane as a helical segment. The Cytoplasmic segment spans residues 125-141 (DRYLAIVHAVFALKART). A helical membrane pass occupies residues 142-166 (VTFGVVTSVITWVVAVFASLPGIIF). Residues 167–198 (TRSQKEGLHYTCSSHFPYSQYQFWKNFQTLKI) are Extracellular-facing. The helical transmembrane segment at 199–218 (VILGLVLPLLVMVICYSGIL) threads the bilayer. At 219–235 (KTLLRCRNEKKRHRAVR) the chain is on the cytoplasmic side. The helical transmembrane segment at 236 to 260 (LIFTIMIVYFLFWAPYNIVLLLNTF) threads the bilayer. The Extracellular portion of the chain corresponds to 261-277 (QEFFGLNNCSSSNRLDQ). The chain crosses the membrane as a helical span at residues 278-301 (AMQVTETLGMTHCCINPIIYAFVG). Residues 302–352 (EKFRNYLLVFFQKHIAKRFCKCCSIFQQEAPERASSVYTRSTGEQEISVGL) are Cytoplasmic-facing. S-palmitoyl cysteine attachment occurs at residues Cys321, Cys323, and Cys324. Ser336, Ser337, Ser342, and Ser349 each carry phosphoserine; by BARK1.

This sequence belongs to the G-protein coupled receptor 1 family. As to quaternary structure, interacts with PRAF2. Efficient ligand binding to CCL3/MIP-1alpha and CCL4/MIP-1beta requires sulfation, O-glycosylation and sialic acid modifications. Glycosylation on Ser-6 is required for efficient binding of CCL4. Interacts with GRK2. Interacts with ARRB1 and ARRB2. Interacts with CNIH4. Interacts with S100A4; this interaction stimulates T-lymphocyte chemotaxis. Post-translationally, sulfated on at least 2 of the N-terminal tyrosines. Sulfation is required for efficient binding of the chemokines, CCL3 and CCL4. Palmitoylation in the C-terminal is important for cell surface expression. In terms of processing, phosphorylation on serine residues in the C-terminal is stimulated by binding CC chemokines especially by APO-RANTES. Post-translationally, O-glycosylated, but not N-glycosylated. Ser-6 appears to be the major site even if Ser-7 may be also O-glycosylated. Also sialylated glycans present which contribute to chemokine binding. Thr-16 and Ser-17 may also be glycosylated and, if so, with small moieties such as a T-antigen.

Its subcellular location is the cell membrane. Receptor for a number of inflammatory CC-chemokines including CCL3/MIP-1-alpha, CCL4/MIP-1-beta and RANTES and subsequently transduces a signal by increasing the intracellular calcium ion level. May play a role in the control of granulocytic lineage proliferation or differentiation. Participates in T-lymphocyte migration to the infection site by acting as a chemotactic receptor. The sequence is that of C-C chemokine receptor type 5 (CCR5) from Pan paniscus (Pygmy chimpanzee).